Here is a 192-residue protein sequence, read N- to C-terminus: Cytochrome c4 (192 aa).

Cytochrome c domains lie at 12–90 (GDPQ…ATQP) and 99–191 (ELAS…QGLS). The heme c site is built by cysteine 25, cysteine 28, histidine 29, cysteine 120, cysteine 123, and histidine 124.

Post-translationally, binds 2 heme c groups covalently per subunit.

It is found in the periplasm. Its function is as follows. Diheme, high potential cytochrome c believed to be an intermediate electron donor in an anaerobic electron transport chain. The protein is Cytochrome c4 of Thiocapsa roseopersicina.